Here is a 376-residue protein sequence, read N- to C-terminus: Putative phosphoserine aminotransferase (376 aa).

An L-glutamate-binding site is contributed by Arg-50. Residues 84–85 (AT), Phe-108, Thr-154, Asp-176, and Gln-199 each bind pyridoxal 5'-phosphate. At Lys-200 the chain carries N6-(pyridoxal phosphate)lysine. 251-252 (NT) is a binding site for pyridoxal 5'-phosphate.

This sequence belongs to the class-V pyridoxal-phosphate-dependent aminotransferase family. SerC subfamily. As to quaternary structure, homodimer. It depends on pyridoxal 5'-phosphate as a cofactor.

The protein localises to the cytoplasm. The enzyme catalyses O-phospho-L-serine + 2-oxoglutarate = 3-phosphooxypyruvate + L-glutamate. It carries out the reaction 4-(phosphooxy)-L-threonine + 2-oxoglutarate = (R)-3-hydroxy-2-oxo-4-phosphooxybutanoate + L-glutamate. It participates in amino-acid biosynthesis; L-serine biosynthesis; L-serine from 3-phospho-D-glycerate: step 2/3. It functions in the pathway cofactor biosynthesis; pyridoxine 5'-phosphate biosynthesis; pyridoxine 5'-phosphate from D-erythrose 4-phosphate: step 3/5. Its function is as follows. Catalyzes the reversible conversion of 3-phosphohydroxypyruvate to phosphoserine and of 3-hydroxy-2-oxo-4-phosphonooxybutanoate to phosphohydroxythreonine. The polypeptide is Putative phosphoserine aminotransferase (Mycobacterium bovis (strain ATCC BAA-935 / AF2122/97)).